Consider the following 30-residue polypeptide: Cyclotide mden-E (30 aa).

The segment at residues 1-30 is a cross-link (cyclopeptide (Gly-Asn)); the sequence is GIPCGESCVYIPCITAAIGCSCKSKVCYRN. 3 disulfides stabilise this stretch: cysteine 4/cysteine 20, cysteine 8/cysteine 22, and cysteine 13/cysteine 27.

The protein belongs to the cyclotide family. Bracelet subfamily. This is a cyclic peptide.

In terms of biological role, probably participates in a plant defense mechanism. The protein is Cyclotide mden-E of Melicytus dentatus (Tree violet).